A 418-amino-acid polypeptide reads, in one-letter code: Isocitrate dehydrogenase [NADP] (418 aa).

NADP(+) is bound at residue Thr106. The D-threo-isocitrate site is built by Ser115, Asn117, Arg121, Arg131, and Arg155. Ser115 is modified (phosphoserine). Thr193 carries the phosphothreonine modification. Asp309 lines the Mg(2+) pocket. Residues 341–347, Asn354, Tyr393, and Arg397 each bind NADP(+); that span reads HGTAPKY.

This sequence belongs to the isocitrate and isopropylmalate dehydrogenases family. Homodimer. It depends on Mg(2+) as a cofactor. The cofactor is Mn(2+).

It is found in the secreted. It catalyses the reaction D-threo-isocitrate + NADP(+) = 2-oxoglutarate + CO2 + NADPH. In terms of biological role, catalyzes the oxidative decarboxylation of isocitrate to 2-oxoglutarate and carbon dioxide with the concomitant reduction of NADP(+). The protein is Isocitrate dehydrogenase [NADP] (icd) of Pseudomonas aeruginosa (strain UCBPP-PA14).